A 235-amino-acid polypeptide reads, in one-letter code: Purine nucleoside phosphorylase DeoD-type (235 aa).

Residue histidine 4 participates in a purine D-ribonucleoside binding. Residues glycine 20, arginine 24, arginine 43, and 87–90 contribute to the phosphate site; that span reads RVGT. A purine D-ribonucleoside is bound by residues glutamate 162, 179–181, and 203–204; these read EME and SD. Aspartate 204 (proton donor) is an active-site residue.

Belongs to the PNP/UDP phosphorylase family. In terms of assembly, homohexamer; trimer of homodimers.

It carries out the reaction a purine D-ribonucleoside + phosphate = a purine nucleobase + alpha-D-ribose 1-phosphate. It catalyses the reaction a purine 2'-deoxy-D-ribonucleoside + phosphate = a purine nucleobase + 2-deoxy-alpha-D-ribose 1-phosphate. Catalyzes the reversible phosphorolytic breakdown of the N-glycosidic bond in the beta-(deoxy)ribonucleoside molecules, with the formation of the corresponding free purine bases and pentose-1-phosphate. This chain is Purine nucleoside phosphorylase DeoD-type, found in Bacillus cereus (strain B4264).